The sequence spans 112 residues: Protein GAST1 (112 aa).

An N-terminal signal peptide occupies residues 1-25; sequence MAGKMSIVLFVLLVVFLTQNQVSRA.

The protein belongs to the GASA family. Post-translationally, six disulfide bonds may be present. All shoot organs.

The protein localises to the secreted. The chain is Protein GAST1 (GAST1) from Solanum lycopersicum (Tomato).